The following is a 205-amino-acid chain: Helix-loop-helix protein 4 (205 aa).

Positions 3–16 (MVVAKRNARERTRV) are basic motif. The region spanning 3 to 56 (MVVAKRNARERTRVHTVNQAFLVLKQHLPSLRQFTKRVSKLRILNAAITYIDTL) is the bHLH domain. The tract at residues 17–56 (HTVNQAFLVLKQHLPSLRQFTKRVSKLRILNAAITYIDTL) is helix-loop-helix motif.

Expressed in the ADL sensory neurons.

It localises to the nucleus. Acts as a transcriptional regulator. May mediate transcriptional activation by binding to the E-box motif 5'-CANNTG-3'. Required for the correct morphology, terminal identity and function of the ADL sensory neurons by controlling the expression of the ADL-specific gene repertoire, including chemoreceptor encoding genes, ion channel encoding genes, neuropeptides and the neurotransmitter eat-4. Regulates the expression of the srh-234 chemoreceptor encoding gene in the ADL neurons under feeding conditions. Plays a role in the chemorepulsive response toward ascaroside pheromones mediated by the ADL sensory neurons. This Caenorhabditis elegans protein is Helix-loop-helix protein 4 (hlh-4).